We begin with the raw amino-acid sequence, 614 residues long: ATP-dependent RNA helicase dbp-3 (614 aa).

The interval 1 to 138 is disordered; that stretch reads MSSTKKHSRS…GTTTPAASTN (138 aa). A compositionally biased stretch (basic and acidic residues) spans 9–36; that stretch reads RSEGEEKDARLAKKVKTDETPVDGEVKK. Basic residues-rich tracts occupy residues 37-58 and 91-109; these read ERKKDKKEKKDKKEKKDKKSKK and KKEKKDKKEKKDKKEKKAK. Low complexity predominate over residues 117-138; that stretch reads EESTSASKATTNGTTTPAASTN. Positions 180 to 207 match the Q motif motif; it reads MNFSQLPQSNLISKNPFAAYTNPTPIQS. The region spanning 210 to 394 is the Helicase ATP-binding domain; that stretch reads WPFSLSGRDV…ESYMINPAQV (185 aa). 223–230 is an ATP binding site; sequence AETGSGKT. The short motif at 340–343 is the DEAD box element; the sequence is DEAD. The 150-residue stretch at 435 to 584 folds into the Helicase C-terminal domain; the sequence is RLYELLKEAQ…PVPEELLKFG (150 aa).

This sequence belongs to the DEAD box helicase family. DDX5/DBP2 subfamily.

It is found in the nucleus. It localises to the nucleolus. The enzyme catalyses ATP + H2O = ADP + phosphate + H(+). Functionally, ATP-dependent RNA helicase required for 60S ribosomal subunit synthesis. Involved in efficient pre-rRNA processing, predominantly at site A3, which is necessary for the normal formation of 25S and 5.8S rRNAs. This is ATP-dependent RNA helicase dbp-3 (dbp-3) from Neurospora crassa (strain ATCC 24698 / 74-OR23-1A / CBS 708.71 / DSM 1257 / FGSC 987).